A 192-amino-acid polypeptide reads, in one-letter code: Imidazoleglycerol-phosphate dehydratase (192 aa).

This sequence belongs to the imidazoleglycerol-phosphate dehydratase family.

It is found in the cytoplasm. The catalysed reaction is D-erythro-1-(imidazol-4-yl)glycerol 3-phosphate = 3-(imidazol-4-yl)-2-oxopropyl phosphate + H2O. It functions in the pathway amino-acid biosynthesis; L-histidine biosynthesis; L-histidine from 5-phospho-alpha-D-ribose 1-diphosphate: step 6/9. The chain is Imidazoleglycerol-phosphate dehydratase from Hydrogenobaculum sp. (strain Y04AAS1).